We begin with the raw amino-acid sequence, 195 residues long: Probable prefoldin subunit 3 (195 aa).

This sequence belongs to the prefoldin subunit alpha family. As to quaternary structure, heterohexamer of two PFD-alpha type and four PFD-beta type subunits.

Binds specifically to cytosolic chaperonin (c-CPN) and transfers target proteins to it. Binds to nascent polypeptide chain and promotes folding in an environment in which there are many competing pathways for nonnative proteins. This chain is Probable prefoldin subunit 3 (pfdn3), found in Dictyostelium discoideum (Social amoeba).